Reading from the N-terminus, the 585-residue chain is Conglutin alpha 3 (585 aa).

An N-terminal signal peptide occupies residues 1–23 (MANPFLLSLSLCLVLLYTSACLG). 2 cysteine pairs are disulfide-bonded: Cys32–Cys65 and Cys108–Cys406. One can recognise a Cupin type-1 1 domain in the interval 37–258 (LNALEPDNRI…ALNIDEDTVH (222 aa)). Disordered regions lie at residues 113 to 147 (EEAQ…HFRE), 199 to 240 (EEYP…ILSG), and 283 to 402 (KWQE…NGLE). Basic and acidic residues predominate over residues 136–147 (EDSHQKIRHFRE). Over residues 211–224 (RQQHQRPSGRRHGQ) the composition is skewed to basic residues. Residues 309 to 320 (REEEEKEEEDEP) show a composition bias toward acidic residues. Residues 338–350 (ERGRGRGGSEWKR) show a composition bias toward basic and acidic residues. A Cupin type-1 2 domain is found at 412–558 (ENIADPTRAD…AFRLSLNQVS (147 aa)). Polar residues predominate over residues 565-579 (NHNPLVTPQSQSQDH). The interval 565-585 (NHNPLVTPQSQSQDHNLVKVA) is disordered.

This sequence belongs to the 11S seed storage protein (globulins) family. In terms of assembly, hexamer; each subunit is composed of an acidic and a basic chain derived from a single precursor and linked by a disulfide bond. Component of globulins complexes which accumulate in seeds.

Functionally, sulfur-rich seed storage protein. This protein found in the seeds of many leguminous and non-leguminous plants is the source of sulfur-containing amino acids in seed meals. The sequence is that of Conglutin alpha 3 from Lupinus angustifolius (Narrow-leaved blue lupine).